We begin with the raw amino-acid sequence, 222 residues long: Large ribosomal subunit protein uL1 (222 aa).

The protein belongs to the universal ribosomal protein uL1 family. As to quaternary structure, part of the 50S ribosomal subunit.

In terms of biological role, binds directly to 23S rRNA. Probably involved in E site tRNA release. Its function is as follows. Protein L1 is also a translational repressor protein, it controls the translation of its operon by binding to its mRNA. The chain is Large ribosomal subunit protein uL1 from Pyrobaculum aerophilum (strain ATCC 51768 / DSM 7523 / JCM 9630 / CIP 104966 / NBRC 100827 / IM2).